The primary structure comprises 259 residues: MVPLMELDELCLLDMLVYLEGFMAFVSIVGLRSVGSPYGRYSPQWPGIRVPARPAWFIQELPSMAWPLYEYIRPAAARLGNLPNRVLLAMFLIHYVQRTLVFPVLIRGGKPTLLVTFVLAFLFCTFNGYVQSRYLSQFAVYAEDWVTHPCFLTGFALWLVGMVINIHSDHILRNLRKPGETGYKIPRGGLFEYVSAANYFGELVEWCGFALASWSLQGVVFALFTLSTLLTRAKQHHQWYHEKFEDYPKSRKILIPFVL.

5 helical membrane-spanning segments follow: residues 10 to 30 (LCLL…SIVG), 86 to 106 (VLLA…PVLI), 111 to 131 (PTLL…GYVQ), 146 to 166 (VTHP…VINI), and 206 to 226 (WCGF…LFTL).

The protein belongs to the steroid 5-alpha reductase family. In terms of tissue distribution, liver and prostate (at a low level).

It localises to the microsome membrane. It is found in the endoplasmic reticulum membrane. It carries out the reaction a 3-oxo-5alpha-steroid + NADP(+) = a 3-oxo-Delta(4)-steroid + NADPH + H(+). The enzyme catalyses 5alpha-pregnane-3,20-dione + NADP(+) = progesterone + NADPH + H(+). The catalysed reaction is 17beta-hydroxy-5alpha-androstan-3-one + NADP(+) = testosterone + NADPH + H(+). It catalyses the reaction androst-4-ene-3,17-dione + NADPH + H(+) = 5alpha-androstan-3,17-dione + NADP(+). In terms of biological role, converts testosterone into 5-alpha-dihydrotestosterone and progesterone or corticosterone into their corresponding 5-alpha-3-oxosteroids. It plays a central role in sexual differentiation and androgen physiology. This chain is 3-oxo-5-alpha-steroid 4-dehydrogenase 1, found in Rattus norvegicus (Rat).